We begin with the raw amino-acid sequence, 330 residues long: D-lactate dehydrogenase (330 aa).

Residues Arg-156–Ile-157, Asp-176, Val-206–Pro-207, Ala-233–Arg-235, and Asp-259 contribute to the NAD(+) site. Arg-235 is a catalytic residue. Glu-264 is a catalytic residue. Residue His-296 is the Proton donor of the active site.

It belongs to the D-isomer specific 2-hydroxyacid dehydrogenase family.

The enzyme catalyses (R)-lactate + NAD(+) = pyruvate + NADH + H(+). This chain is D-lactate dehydrogenase (ldhD), found in Staphylococcus aureus (strain Mu50 / ATCC 700699).